Here is a 1401-residue protein sequence, read N- to C-terminus: DNA-directed RNA polymerase subunit beta' (1401 aa).

Positions 70, 72, 85, and 88 each coordinate Zn(2+). Mg(2+) is bound by residues Asp460, Asp462, and Asp464. 4 residues coordinate Zn(2+): Cys808, Cys882, Cys889, and Cys892.

The protein belongs to the RNA polymerase beta' chain family. In terms of assembly, the RNAP catalytic core consists of 2 alpha, 1 beta, 1 beta' and 1 omega subunit. When a sigma factor is associated with the core the holoenzyme is formed, which can initiate transcription. Mg(2+) serves as cofactor. The cofactor is Zn(2+).

The catalysed reaction is RNA(n) + a ribonucleoside 5'-triphosphate = RNA(n+1) + diphosphate. DNA-dependent RNA polymerase catalyzes the transcription of DNA into RNA using the four ribonucleoside triphosphates as substrates. The sequence is that of DNA-directed RNA polymerase subunit beta' from Legionella pneumophila (strain Corby).